The primary structure comprises 460 residues: MSDYETILKGKYPAKDHAKRVADHIRSKVPGANGILYLEGRHTKLEEDSDHPEPFRQRRYFFYLTGCILADCHYIFDLKTSQSTLFIPPVDPEDVIWSGMPMTAEEAKEKYDIDNVLYTNEVNAELARLGKGSGSTAFAIANQVLDTVSFIGFEDKNFDVLKGAIEECRVVKDDYEVALTRKANAISTTAHHAVMKAVNTAKNEQELEAIFLERCFAHGAKNQAYHAIHAAGRAAATLHYVHNSAPLDGKLNVLLDGGAEWDCYASDITRTFPISGKFSKESRAIYDIVLKMQLESIKVLKEGILWDDVHELAHKIAIEGLLDLGILKGEADEILKARTSVAFFPHGLGHYLGMDTHDVGGTPNYADSDPMFRYLRKRGTLPAGSLVTVEPGIYFCSFIIEPYLKDPTHSKYIDTDVLDKYWDVGGVRIEDNLLITKTGSENLTPTIKEPEEIEKFVGSS.

Mn(2+)-binding residues include aspartate 256, aspartate 267, glutamate 390, and glutamate 430.

Belongs to the peptidase M24B family. Requires Mn(2+) as cofactor.

The enzyme catalyses Release of any N-terminal amino acid, including proline, that is linked to proline, even from a dipeptide or tripeptide.. Its function is as follows. Catalyzes the removal of a penultimate prolyl residue from the N-termini of peptides. This Verticillium alfalfae (strain VaMs.102 / ATCC MYA-4576 / FGSC 10136) (Verticillium wilt of alfalfa) protein is Probable Xaa-Pro aminopeptidase VDBG_02538.